A 2067-amino-acid chain; its full sequence is Non-reducing polyketide synthase PKS12 (2067 aa).

The interval 4–241 is N-terminal acylcarrier protein transacylase (SAT) domain; that stretch reads FVFGDQSTRF…LPVPIYAPYH (238 aa). The interval 350-373 is disordered; sequence NSMGPKASTSHSSAETQTESSSKN. A compositionally biased stretch (polar residues) spans 356–373; that stretch reads ASTSHSSAETQTESSSKN. Residues 373 to 808 enclose the Ketosynthase family 3 (KS3) domain; it reads NSKIAIVAMS…GGNSAVLLQD (436 aa). Residues cysteine 545, histidine 680, and histidine 725 each act as for beta-ketoacyl synthase activity in the active site. Residues 912–1199 form a malonyl-CoA:ACP transacylase (MAT) domain region; sequence FVFSGQGAQY…VVCSTFLKSS (288 aa). Catalysis depends on serine 1001, which acts as the For acyl/malonyl transferase activity. The tract at residues 1297-1433 is N-terminal hotdog fold; sequence QKILQETSLD…CELRLEHPSQ (137 aa). In terms of domain architecture, PKS/mFAS DH spans 1297–1606; that stretch reads QKILQETSLD…FQGLPRRVLN (310 aa). Histidine 1329 acts as the Proton acceptor; for dehydratase activity in catalysis. The tract at residues 1329 to 1604 is product template (PT) domain; that stretch reads HRVNGVKVCT…ITFQGLPRRV (276 aa). The segment at 1460 to 1606 is C-terminal hotdog fold; sequence LDSMLATGMV…FQGLPRRVLN (147 aa). Aspartate 1519 acts as the Proton donor; for dehydratase activity in catalysis. The interval 1619 to 1648 is disordered; the sequence is APMGRRDVPPSRMDVPPVRSGEGPPTSAPT. Positions 1660-1738 constitute a Carrier domain; it reads TSMDSRLRPL…SFKLFLGLVD (79 aa). Residue serine 1698 is modified to O-(pantetheine 4'-phosphoryl)serine. The interval 1742–1779 is disordered; the sequence is KSSSGSDGSGRSSPAPGIESGATTPPMSEEDQDKIVSS. Residues 1743–1754 show a composition bias toward low complexity; it reads SSSGSDGSGRSS. A claisen cyclase domain region spans residues 1781-2065; sequence SLHQFQASST…YVSAFLARAL (285 aa). The active-site For Claisen cyclase activity is the serine 1875.

It catalyses the reaction 6 malonyl-CoA + acetyl-CoA + 6 H(+) = naphtopyrone YWA1 + 6 CO2 + 7 CoA + H2O. The protein operates within pigment biosynthesis. Non-reducing polyketide synthase; part of the gene cluster that mediates the biosynthesis of aurofusarin, a red mycelium pigment which is acting as a mycotoxin. The first step is performed by the polyketide synthase which condenses one acetyl-CoA and 6 malonyl-CoA units to form the first intermediate, the cyclic heptaketide and yellow pigment YWA1. The C2 hydroxyl group in the pyrone ring of YWA1 is probably formed during ring closure by an aldol-type cyclization reaction. The dehydratase aurZ then acts as the first tailoring enzyme in the aurofusarin biosynthetic pathway by converting YWA1 to nor-rubrofusarin. Nor-rubrofusarin is then methylated to rubrofusarin by the O-methyltransferase aurJ. Rubrofusarin is then transported across the plasma membrane by the rubrofusarin-specific pump aurT for further enzymatic processing by the extracellular complex composed of GIP1, aurF, aurO and aurS to yield aurofusarin. This Gibberella zeae (strain ATCC MYA-4620 / CBS 123657 / FGSC 9075 / NRRL 31084 / PH-1) (Wheat head blight fungus) protein is Non-reducing polyketide synthase PKS12.